The sequence spans 526 residues: ATP synthase subunit alpha (526 aa).

Residue 171–178 participates in ATP binding; sequence GDRQTGKT.

It belongs to the ATPase alpha/beta chains family. F-type ATPases have 2 components, CF(1) - the catalytic core - and CF(0) - the membrane proton channel. CF(1) has five subunits: alpha(3), beta(3), gamma(1), delta(1), epsilon(1). CF(0) has four main subunits: a, b, b' and c.

It is found in the cell inner membrane. It carries out the reaction ATP + H2O + 4 H(+)(in) = ADP + phosphate + 5 H(+)(out). Its function is as follows. Produces ATP from ADP in the presence of a proton gradient across the membrane. The alpha chain is a regulatory subunit. This chain is ATP synthase subunit alpha, found in Pelodictyon phaeoclathratiforme (strain DSM 5477 / BU-1).